Consider the following 443-residue polypeptide: Thymidine phosphorylase (443 aa).

Belongs to the thymidine/pyrimidine-nucleoside phosphorylase family. In terms of assembly, homodimer.

It carries out the reaction thymidine + phosphate = 2-deoxy-alpha-D-ribose 1-phosphate + thymine. The protein operates within pyrimidine metabolism; dTMP biosynthesis via salvage pathway; dTMP from thymine: step 1/2. The enzymes which catalyze the reversible phosphorolysis of pyrimidine nucleosides are involved in the degradation of these compounds and in their utilization as carbon and energy sources, or in the rescue of pyrimidine bases for nucleotide synthesis. This Aeromonas hydrophila subsp. hydrophila (strain ATCC 7966 / DSM 30187 / BCRC 13018 / CCUG 14551 / JCM 1027 / KCTC 2358 / NCIMB 9240 / NCTC 8049) protein is Thymidine phosphorylase.